Reading from the N-terminus, the 607-residue chain is Hemagglutinin glycoprotein (607 aa).

At M1 to Y37 the chain is on the intravirion side. The chain crosses the membrane as a helical span at residues L38–V58. Residues R59–P607 are Virion surface-facing. 6 N-linked (GlcNAc...) asparagine; by host glycosylation sites follow: N149, N391, N422, N456, N587, and N603.

Belongs to the paramyxoviruses hemagglutinin-neuraminidase family. Non-sialidase subfamily. As to quaternary structure, binds canine SLAMF1 at the cell surface.

The protein resides in the virion membrane. It localises to the host cell membrane. Its function is as follows. Attaches the virus to cell receptors and thereby initiating infection. Binding of H protein to the receptor induces a conformational change that allows the F protein to trigger virion/cell membranes fusion. The cellular receptor might be SLAM, and may explain the lymphotropism of the virus. In Ailuropoda melanoleuca (Giant panda), this protein is Hemagglutinin glycoprotein (H).